Reading from the N-terminus, the 58-residue chain is Isocitrate lyase (58 aa).

Belongs to the isocitrate lyase/PEP mutase superfamily. Isocitrate lyase family. Homotetramer. It depends on Mg(2+) as a cofactor.

It is found in the glyoxysome. The catalysed reaction is D-threo-isocitrate = glyoxylate + succinate. Its pathway is carbohydrate metabolism; glyoxylate cycle; (S)-malate from isocitrate: step 1/2. Its function is as follows. Involved in storage lipid mobilization during the growth of higher plant seedling. This chain is Isocitrate lyase, found in Helianthus annuus (Common sunflower).